Reading from the N-terminus, the 699-residue chain is MSDDERDDWPVQDIVYTSIVGVVMLAAVLEWFLWIAAFLYCLWKVFVKAEHWTIRVLSVVVALLFTALRSIFLPIMVVTLPLPAAVVEVWPPGMVEVLQWFGFWCFAGLLTVPWLFCIYQLVTNQLGRTKRIKQVLDEVSAPKVVIVMPCYKEEPDILVKAVDSVVDCDYPPSCIHVFLSFDGDQEDELYLRTIESLGISLTLESYPKSIDVTYKEARITVSRFPHGGKRHCQKATFELIDKVYRHYLQRNDNLFILFIDSDCILDRHCLQNFVYDMELSPGNRRDMLAMTGVITSTTRKHSLITILQDMEYVHGQLFERTVESGCGSVTCLPGALTMLRFSAFRRMAKYYFADKAEQCDDLFDFAKCHLGEDRWLTHLFMIGAKKRYQIQMCTSAFCKTEAAQTTKSLIKQRRRWFLGFITNEACMLTDWRLWKRYPVLIFVRFMQNTIRTTALLFFIMVLAIITTSKKVDQLPVGFIAVSLGLNWLLMIYFGAKLKRFKVWLYPVMFVVNPFFNWFYMVYGIFTAGQRTWGGPRADAAEASSGATAQEAIEQAEKAGDDLNIVPEMFVRAAAARRRSLNKGNQGGGLGRKTSVVRPPDKIDGRFTARNQLHGGFFTHGDESLDSIAAGGSGEASEPGTRWAPDPRESFDSTLYSQTYGNYGVPPRRLESIMDDEDRKKFELAQQSQSYTILRPARIV.

Helical transmembrane passes span 19–39 (IVGV…AAFL), 58–80 (SVVV…VVTL), 98–118 (LQWF…LFCI), 445–465 (FMQN…LAII), 474–494 (LPVG…IYFG), and 507–527 (VMFV…IFTA). Residues 628–648 (AAGGSGEASEPGTRWAPDPRE) form a disordered region.

Belongs to the chitin synthase family. Class VI subfamily.

It is found in the cell membrane. It carries out the reaction [(1-&gt;4)-N-acetyl-beta-D-glucosaminyl](n) + UDP-N-acetyl-alpha-D-glucosamine = [(1-&gt;4)-N-acetyl-beta-D-glucosaminyl](n+1) + UDP + H(+). Functionally, polymerizes chitin, a structural polymer of the cell wall and septum, by transferring the sugar moiety of UDP-GlcNAc to the non-reducing end of the growing chitin polymer. Plays a role in cell wall integrity. Required to successfully penetrate the host plants and thus plays a key role in pathogenicity. The chain is Chitin synthase 7 from Verticillium dahliae (strain VdLs.17 / ATCC MYA-4575 / FGSC 10137) (Verticillium wilt).